Consider the following 71-residue polypeptide: Pro-glucagon (71 aa).

It belongs to the glucagon family.

It localises to the secreted. Plays a key role in glucose metabolism and homeostasis. Regulates blood glucose by increasing gluconeogenesis and decreasing glycolysis. This Piaractus mesopotamicus (Small-scaled pacu) protein is Pro-glucagon (gcg).